We begin with the raw amino-acid sequence, 878 residues long: Alanine--tRNA ligase (878 aa).

Residues histidine 567, histidine 571, cysteine 669, and histidine 673 each contribute to the Zn(2+) site.

Belongs to the class-II aminoacyl-tRNA synthetase family. Zn(2+) serves as cofactor.

It is found in the cytoplasm. The enzyme catalyses tRNA(Ala) + L-alanine + ATP = L-alanyl-tRNA(Ala) + AMP + diphosphate. In terms of biological role, catalyzes the attachment of alanine to tRNA(Ala) in a two-step reaction: alanine is first activated by ATP to form Ala-AMP and then transferred to the acceptor end of tRNA(Ala). Also edits incorrectly charged Ser-tRNA(Ala) and Gly-tRNA(Ala) via its editing domain. The sequence is that of Alanine--tRNA ligase from Rickettsia conorii (strain ATCC VR-613 / Malish 7).